A 184-amino-acid chain; its full sequence is uncharacterized protein (184 aa).

A helical membrane pass occupies residues 35–55 (LSFLIYILYTFSISGLSTFVI).

It is found in the membrane. This is an uncharacterized protein from Schizosaccharomyces pombe (strain 972 / ATCC 24843) (Fission yeast).